The following is a 770-amino-acid chain: Integrin beta-2 (770 aa).

Positions 1–22 are cleaved as a signal peptide; it reads MLPQRPQLLLLAGLLSLQSVLS. Residue Gln23 is modified to Pyrrolidone carboxylic acid. Residues 23 to 701 are Extracellular-facing; sequence QECTKYKVST…DMLECVKGPN (679 aa). Residues 24 to 74 enclose the PSI domain; it reads ECTKYKVSTCRDCIESGPSCAWCQKLNFTGQGEPDSTRCDTRAQLLSKGCP. Disulfide bonds link Cys25–Cys43, Cys33–Cys447, Cys36–Cys62, Cys46–Cys73, Cys191–Cys198, Cys246–Cys286, Cys386–Cys400, Cys420–Cys445, Cys449–Cys467, Cys459–Cys470, Cys472–Cys481, Cys483–Cys514, Cys497–Cys512, Cys506–Cys517, Cys519–Cys534, Cys536–Cys559, Cys541–Cys557, Cys549–Cys562, Cys564–Cys573, Cys575–Cys598, Cys582–Cys596, Cys590–Cys601, Cys603–Cys612, Cys615–Cys618, Cys622–Cys663, Cys628–Cys647, Cys631–Cys643, and Cys671–Cys696. Asn50 and Asn116 each carry an N-linked (GlcNAc...) asparagine glycan. One can recognise a VWFA domain in the interval 124–363; the sequence is GYPIDLYYLM…ELIKSAYNKL (240 aa). Mg(2+) is bound by residues Ser136 and Ser138. The Ca(2+) site is built by Ser138, Asp141, Asp142, and Asp173. Residues Asn229, Asp231, Pro233, and Glu234 each coordinate Ca(2+). Glu234 provides a ligand contact to Mg(2+). A glycan (N-linked (GlcNAc...) asparagine) is linked at Asn254. 2 residues coordinate Ca(2+): Asp264 and Glu347. Positions 397 to 399 match the Cell attachment site motif; that stretch reads RGD. 4 consecutive I-EGF domains span residues 449 to 482, 483 to 535, 536 to 574, and 575 to 613; these read CREASRDRGVCGGRGSMECGVCRCDAGYIGKNCE, CQTH…QFCE, CDNVNCERYDGQVCGGDKRGLCFCGACRCNDQYEGSACQ, and CLKSTQGCLNLNGVECSGRGRCRCNVCQCDPGYQPPLCI. Asn501 is a glycosylation site (N-linked (GlcNAc...) asparagine). Asn642 carries an N-linked (GlcNAc...) asparagine glycan. A helical transmembrane segment spans residues 702 to 724; that stretch reads IAAIVGGTVGGVVLVGILLLAIW. Over 725 to 770 the chain is Cytoplasmic; that stretch reads KALTHLSDLREYHRFEKEKLKSQWNNDNPLFKSATTTVMNPKFAES. 2 positions are modified to phosphoserine: Ser746 and Ser757. 2 positions are modified to phosphothreonine: Thr759 and Thr761.

The protein belongs to the integrin beta chain family. Heterodimer of an alpha and a beta subunit. The ITGB2 beta subunit associates with the ITGAL, ITGAM, ITGAX or ITGAD alpha subunits. Found in a complex with CD177 and ITGAM/CD11b. Interacts with FGR. Interacts with COPS5 and RANBP9. Interacts with FLNA (via filamin repeats 4, 9, 12, 17, 19, 21, and 23). Interacts with THBD. Post-translationally, both Ser-746 and Ser-757 become phosphorylated when T-cells are exposed to phorbol esters. Phosphorylation on Thr-759 (but not on Ser-757) allows interaction with 14-3-3 proteins.

The protein resides in the cell membrane. It localises to the membrane raft. Its function is as follows. Integrin ITGAL/ITGB2 is a receptor for ICAM1, ICAM2, ICAM3 and ICAM4. Integrin ITGAL/ITGB2 is also a receptor for the secreted form of ubiquitin-like protein ISG15; the interaction is mediated by ITGAL. Integrins ITGAM/ITGB2 and ITGAX/ITGB2 are receptors for the iC3b fragment of the third complement component and for fibrinogen. Integrin ITGAX/ITGB2 recognizes the sequence G-P-R in fibrinogen alpha-chain. Integrin ITGAM/ITGB2 recognizes P1 and P2 peptides of fibrinogen gamma chain. Integrin ITGAM/ITGB2 is also a receptor for factor X. Integrin ITGAD/ITGB2 is a receptor for ICAM3 and VCAM1. Contributes to natural killer cell cytotoxicity. Involved in leukocyte adhesion and transmigration of leukocytes including T-cells and neutrophils. Triggers neutrophil transmigration during lung injury through PTK2B/PYK2-mediated activation. Integrin ITGAL/ITGB2 in association with ICAM3, contributes to apoptotic neutrophil phagocytosis by macrophages. In association with alpha subunit ITGAM/CD11b, required for CD177-PRTN3-mediated activation of TNF primed neutrophils. The chain is Integrin beta-2 (ITGB2) from Ovis canadensis (Bighorn sheep).